The sequence spans 361 residues: ATP-dependent 6-phosphofructokinase 1 (361 aa).

ATP-binding positions include Gly-14, 79–80, and 116–119; these read KG and GDGS. Mg(2+) is bound at residue Asp-117. Substrate contacts are provided by residues 140–142, Arg-177, 184–186, Glu-237, Arg-278, and 284–287; these read TID, MGR, and HIQR. Catalysis depends on Asp-142, which acts as the Proton acceptor.

The protein belongs to the phosphofructokinase type A (PFKA) family. Mixed-substrate PFK group III subfamily. Homodimer or homotetramer. Requires Mg(2+) as cofactor.

The protein resides in the cytoplasm. It carries out the reaction beta-D-fructose 6-phosphate + ATP = beta-D-fructose 1,6-bisphosphate + ADP + H(+). It participates in carbohydrate degradation; glycolysis; D-glyceraldehyde 3-phosphate and glycerone phosphate from D-glucose: step 3/4. In terms of biological role, catalyzes the phosphorylation of D-fructose 6-phosphate to fructose 1,6-bisphosphate by ATP, the first committing step of glycolysis. The polypeptide is ATP-dependent 6-phosphofructokinase 1 (Synechocystis sp. (strain ATCC 27184 / PCC 6803 / Kazusa)).